Here is a 768-residue protein sequence, read N- to C-terminus: Transferrin receptor protein 1 (768 aa).

The Cytoplasmic portion of the chain corresponds to 1-68 (MMDQARSAFS…VAKPKRLNGY (68 aa)). A mediates interaction with SH3BP4 region spans residues 1–70 (MMDQARSAFS…KPKRLNGYVC (70 aa)). Phosphoserine occurs at positions 10 and 19. Residue Y20 is modified to Phosphotyrosine. Positions 20–23 (YTRF) match the Endocytosis signal motif. T21 carries the phosphothreonine modification. Phosphoserine is present on S24. Positions 61–64 (KPKR) match the Stop-transfer sequence motif. The chain crosses the membrane as a helical span at residues 69-89 (VCYGIIAVITFFLIGFMIGYL). C70 carries the S-palmitoyl cysteine lipid modification. Over 90–768 (AYCKRVESKT…GDIWDIDNEF (679 aa)) the chain is Extracellular. Positions 231 to 321 (SKATTVTGKL…GTGDPYTPGF (91 aa)) constitute a PA domain. N-linked (GlcNAc...) asparagine glycans are attached at residues N259 and N325. The tract at residues 577 to 768 (TMDTYDVLSK…GDIWDIDNEF (192 aa)) is ligand-binding. A Cell attachment site motif is present at residues 654-656 (RGD). N730 and N735 each carry an N-linked (GlcNAc...) asparagine glycan.

The protein belongs to the peptidase M28 family. M28B subfamily. Homodimer; disulfide-linked. Binds one transferrin or HFE molecule per subunit. Interacts with SH3BP4. Interacts with SH3BP3. Interacts with STEAP3; facilitates TFRC endocytosis in erythroid precursor cells. Stearoylated by ZDHHC6 which inhibits TFRC-mediated activation of the JNK pathway and promotes mitochondrial fragmentation. Stearoylation does not affect iron uptake.

Its subcellular location is the cell membrane. It is found in the melanosome. In terms of biological role, cellular uptake of iron occurs via receptor-mediated endocytosis of ligand-occupied transferrin receptor into specialized endosomes. Endosomal acidification leads to iron release. The apotransferrin-receptor complex is then recycled to the cell surface with a return to neutral pH and the concomitant loss of affinity of apotransferrin for its receptor. Transferrin receptor is necessary for development of erythrocytes and the nervous system. Positively regulates T and B cell proliferation through iron uptake. Acts as a lipid sensor that regulates mitochondrial fusion by regulating activation of the JNK pathway. When dietary levels of stearate (C18:0) are low, promotes activation of the JNK pathway, resulting in HUWE1-mediated ubiquitination and subsequent degradation of the mitofusin MFN2 and inhibition of mitochondrial fusion. When dietary levels of stearate (C18:0) are high, TFRC stearoylation inhibits activation of the JNK pathway and thus degradation of the mitofusin MFN2. Mediates uptake of NICOL1 into fibroblasts where it may regulate extracellular matrix production. This is Transferrin receptor protein 1 (TFRC) from Sus scrofa (Pig).